The chain runs to 68 residues: Large ribosomal subunit protein bL31 (68 aa).

Zn(2+) contacts are provided by Cys-16, Cys-18, Cys-36, and Cys-39.

It belongs to the bacterial ribosomal protein bL31 family. Type A subfamily. In terms of assembly, part of the 50S ribosomal subunit. The cofactor is Zn(2+).

Functionally, binds the 23S rRNA. This chain is Large ribosomal subunit protein bL31, found in Dictyoglomus thermophilum (strain ATCC 35947 / DSM 3960 / H-6-12).